The primary structure comprises 196 residues: Pyridoxal 5'-phosphate synthase subunit PdxT (196 aa).

46-48 serves as a coordination point for L-glutamine; sequence GES. Cys-78 (nucleophile) is an active-site residue. L-glutamine contacts are provided by residues Arg-105 and 133-134; that span reads IR. Catalysis depends on charge relay system residues His-169 and Glu-171.

It belongs to the glutaminase PdxT/SNO family. In terms of assembly, in the presence of PdxS, forms a dodecamer of heterodimers. Only shows activity in the heterodimer.

The enzyme catalyses aldehydo-D-ribose 5-phosphate + D-glyceraldehyde 3-phosphate + L-glutamine = pyridoxal 5'-phosphate + L-glutamate + phosphate + 3 H2O + H(+). It carries out the reaction L-glutamine + H2O = L-glutamate + NH4(+). It participates in cofactor biosynthesis; pyridoxal 5'-phosphate biosynthesis. Functionally, catalyzes the hydrolysis of glutamine to glutamate and ammonia as part of the biosynthesis of pyridoxal 5'-phosphate. The resulting ammonia molecule is channeled to the active site of PdxS. In Geobacillus stearothermophilus (Bacillus stearothermophilus), this protein is Pyridoxal 5'-phosphate synthase subunit PdxT.